Reading from the N-terminus, the 81-residue chain is Protein Vpu (81 aa).

The Extracellular segment spans residues M1–I6. A helical transmembrane segment spans residues A7–I27. Over E28–L81 the chain is Cytoplasmic. 2 positions are modified to phosphoserine; by host CK2: S52 and S56.

Belongs to the HIV-1 VPU protein family. Homopentamer. Interacts with host CD4 and BRTC; these interactions induce proteasomal degradation of CD4. Interacts with host BST2; this interaction leads to the degradation of host BST2. Interacts with host FBXW11. Interacts with host AP1M1; this interaction plays a role in the mistrafficking and subsequent degradation of host BST2. Interacts with host RANBP2; this interaction allows Vpu to down-regulate host BLM sumoylation. Phosphorylated by host CK2. This phosphorylation is necessary for interaction with human BTRC and degradation of CD4.

It is found in the host membrane. Its activity is regulated as follows. Ion channel activity is inhibited by hexamethylene amiloride in vitro. Enhances virion budding by targeting host CD4 and Tetherin/BST2 to proteasome degradation. Degradation of CD4 prevents any unwanted premature interactions between viral Env and its host receptor CD4 in the endoplasmic reticulum. Degradation of antiretroviral protein Tetherin/BST2 is important for virion budding, as BST2 tethers new viral particles to the host cell membrane. Mechanistically, Vpu bridges either CD4 or BST2 to BTRC, a substrate recognition subunit of the Skp1/Cullin/F-box protein E3 ubiquitin ligase, induces their ubiquitination and subsequent proteasomal degradation. The alteration of the E3 ligase specificity by Vpu seems to promote the degradation of host IKBKB, leading to NF-kappa-B down-regulation and subsequent apoptosis. Acts as a viroporin that forms an oligomeric ion channel in membranes. Modulates the host DNA repair mechanisms to promote degradation of nuclear viral cDNA in cells that are already productively infected in order to suppress immune sensing and proviral hyper-integration (superinfection). Manipulates PML-NBs and modulates SUMOylation of host BLM protein thereby enhancing its DNA-end processing activity toward viral unintegrated linear DNA. Also inhibits RAD52-mediated homologous repair of viral cDNA, preventing the generation of dead-end circular forms of single copies of the long terminal repeat and permitting sustained nucleolytic attack. The protein is Protein Vpu of Homo sapiens (Human).